The primary structure comprises 351 residues: MTATIKLGELAEFLGATLRGSPEKEITGLATLQEAGPAQLSFLANPQYRKYLVDSQAAAVLLKAADAEGFAGDALVVADPYLAYARVSHLFDPKPKAAAGVHPSAVIADDAQVDPAASIGAFAVVESGARIAAGVTVGAHCFIGARCEIGADGWLAPRVTLYHDVRIGERVVIQSGAVIGGEGFGFANAKGIWNKIAQVGGVLIGDDVEIGVNTAVDRGALADTVIGNGVKLDNQIQIAHNVQIGDHTAMAACVGISGSTKIGKHCMLAGGVGLVGHIDICDNVFITGMTMVTHSITEPGAYSSGTAMQPAAEWRKSAARLRQLDDMARRLKQLEKRVGDVTPGGNASSEG.

The Proton acceptor role is filled by H240.

This sequence belongs to the transferase hexapeptide repeat family. LpxD subfamily. As to quaternary structure, homotrimer.

The catalysed reaction is a UDP-3-O-[(3R)-3-hydroxyacyl]-alpha-D-glucosamine + a (3R)-hydroxyacyl-[ACP] = a UDP-2-N,3-O-bis[(3R)-3-hydroxyacyl]-alpha-D-glucosamine + holo-[ACP] + H(+). Its pathway is bacterial outer membrane biogenesis; LPS lipid A biosynthesis. In terms of biological role, catalyzes the N-acylation of UDP-3-O-acylglucosamine using 3-hydroxyacyl-ACP as the acyl donor. Is involved in the biosynthesis of lipid A, a phosphorylated glycolipid that anchors the lipopolysaccharide to the outer membrane of the cell. In Pseudomonas fluorescens (strain SBW25), this protein is UDP-3-O-acylglucosamine N-acyltransferase.